A 291-amino-acid polypeptide reads, in one-letter code: Protein pxr1 (291 aa).

Positions 1–11 are enriched in basic residues; the sequence is MGLAAPRKRTK. Disordered regions lie at residues 1 to 26 and 146 to 268; these read MGLAAPRKRTKISHDPNNTTWSRSTD and LVPP…FRGR. Composition is skewed to polar residues over residues 15 to 25 and 146 to 156; these read DPNNTTWSRST and LVPPTSQNGQA. One can recognise a G-patch domain in the interval 25–79; sequence TDGFGHRILKAQGWTPGSFLGPRNAAHSDLFTTASASHIRVVLKDDNLGLGARPK. Residues 194 to 205 show a composition bias toward basic and acidic residues; that stretch reads ETNSRGSREKER. Over residues 206–219 the composition is skewed to basic residues; it reads KREKRQMRRDKKRK. The segment covering 230-247 has biased composition (basic and acidic residues); the sequence is MQEKTRVQGPSEDVKPTE.

It belongs to the PINX1 family.

It localises to the nucleus. It is found in the nucleolus. Its function is as follows. Involved in rRNA-processing at A0, A1 and A2 sites and negatively regulates telomerase. In Aspergillus clavatus (strain ATCC 1007 / CBS 513.65 / DSM 816 / NCTC 3887 / NRRL 1 / QM 1276 / 107), this protein is Protein pxr1 (pxr1).